Reading from the N-terminus, the 1379-residue chain is Protein three rows (1379 aa).

The segment at 1031–1037 (VEPIRKQ) is separase cleavage-site. 3 disordered regions span residues 1206-1231 (PEDK…KQSA), 1248-1309 (PSAT…ATSK), and 1328-1379 (ITTS…RHRH). The span at 1213–1228 (ATGSVSAVKNTASKVK) shows a compositional bias: polar residues. Low complexity predominate over residues 1248–1267 (PSATSCSSSGGSGTENTPPS).

Interacts with pim and Sse. Cleavage of thr contributes to inactivation of Sse. In terms of processing, proteolytically cleaved after the metaphase-to-anaphase transition, C-terminal cleavage product is degraded. Cleavage can only proceed within complexes that contain active Sse. In terms of tissue distribution, during embryogenesis, expressed in Malpighian tubule buds, and epithelia of foregut and hindgut.

The protein localises to the cytoplasm. Required specifically for chromosome disjunction during all mitoses; maternally provided protein is sufficient until mitosis 14 then zygotic protein is required. Involved in formation and/or maintenance of epithelial structures: bud extension during Malpighian tubule development, and foregut and hindgut morphogenesis. This chain is Protein three rows (thr), found in Drosophila melanogaster (Fruit fly).